Consider the following 163-residue polypeptide: Nucleotide-binding protein YajQ (163 aa).

It belongs to the YajQ family.

Nucleotide-binding protein. The chain is Nucleotide-binding protein YajQ from Salmonella typhi.